The following is a 305-amino-acid chain: Protoheme IX farnesyltransferase (305 aa).

9 helical membrane passes run 28–48 (VVLL…PGIV), 52–72 (VFLF…AINH), 102–122 (IFAA…VNLL), 123–143 (TALL…LYLK), 150–170 (IVIG…AVTG), 176–196 (ALIL…ALAI), 221–241 (INIL…FVIM), 243–263 (SGWI…YWAI), and 282–302 (IWYL…YLAL).

Belongs to the UbiA prenyltransferase family. Protoheme IX farnesyltransferase subfamily.

The protein resides in the cell inner membrane. The enzyme catalyses heme b + (2E,6E)-farnesyl diphosphate + H2O = Fe(II)-heme o + diphosphate. It functions in the pathway porphyrin-containing compound metabolism; heme O biosynthesis; heme O from protoheme: step 1/1. In terms of biological role, converts heme B (protoheme IX) to heme O by substitution of the vinyl group on carbon 2 of heme B porphyrin ring with a hydroxyethyl farnesyl side group. The sequence is that of Protoheme IX farnesyltransferase from Coxiella burnetii (strain CbuK_Q154) (Coxiella burnetii (strain Q154)).